We begin with the raw amino-acid sequence, 439 residues long: Xylose isomerase (439 aa).

Catalysis depends on residues His-101 and Asp-104. Mg(2+) contacts are provided by Glu-232, Glu-268, His-271, Asp-296, Asp-307, Asp-309, and Asp-339.

Belongs to the xylose isomerase family. Homotetramer. Mg(2+) serves as cofactor.

The protein localises to the cytoplasm. It catalyses the reaction alpha-D-xylose = alpha-D-xylulofuranose. This chain is Xylose isomerase, found in Photorhabdus laumondii subsp. laumondii (strain DSM 15139 / CIP 105565 / TT01) (Photorhabdus luminescens subsp. laumondii).